Reading from the N-terminus, the 108-residue chain is UPF0060 membrane protein Nham_2004 (108 aa).

Helical transmembrane passes span 5–25 (AAYV…WAWL), 31–51 (VWWL…LTLV), 61–81 (AAYG…VEGL), and 88–108 (LTGA…PRQI).

The protein belongs to the UPF0060 family.

The protein localises to the cell inner membrane. This Nitrobacter hamburgensis (strain DSM 10229 / NCIMB 13809 / X14) protein is UPF0060 membrane protein Nham_2004.